We begin with the raw amino-acid sequence, 206 residues long: Alpha-S1-casein (206 aa).

A signal peptide spans 1–15 (MKLLIFICLAAVALA). 8 positions are modified to phosphoserine: Ser-33, Ser-77, Ser-78, Ser-79, Ser-80, Ser-81, Ser-82, and Ser-89. The disordered stretch occupies residues 67 to 106 (HGMEGHEQRGSSSSSSEEVVGNSAEQKHVQKEEDVPSQSY). A compositionally biased stretch (basic and acidic residues) spans 91–100 (EQKHVQKEED).

The protein belongs to the alpha-casein family. As to expression, mammary gland specific. Secreted in milk.

Its subcellular location is the secreted. Functionally, important role in the capacity of milk to transport calcium phosphate. This Sus scrofa (Pig) protein is Alpha-S1-casein (CSN1S1).